The following is a 262-amino-acid chain: Thiamine thiazole synthase (262 aa).

NAD(+)-binding positions include Ala36, 55–56, Gly63, Val127, and 154–156; these read EK and HVD. Asp156 and His171 together coordinate Fe cation. Position 224 (Met224) interacts with NAD(+). Residue Arg234 participates in glycine binding.

Belongs to the THI4 family. As to quaternary structure, homooctamer; tetramer of dimers. It depends on Fe(2+) as a cofactor.

It carries out the reaction hydrogen sulfide + glycine + NAD(+) = ADP-5-ethyl-4-methylthiazole-2-carboxylate + nicotinamide + 3 H2O + H(+). It functions in the pathway cofactor biosynthesis; thiamine diphosphate biosynthesis. In terms of biological role, involved in the biosynthesis of the thiazole moiety of thiamine. Catalyzes the conversion of NAD and glycine to adenosine diphosphate 5-(2-hydroxyethyl)-4-methylthiazole-2-carboxylate (ADT), an adenylated thiazole intermediate, using free sulfide as a source of sulfur. The polypeptide is Thiamine thiazole synthase (Methanothrix thermoacetophila (strain DSM 6194 / JCM 14653 / NBRC 101360 / PT) (Methanosaeta thermophila)).